A 339-amino-acid polypeptide reads, in one-letter code: Senescence-specific cysteine protease SAG39 (339 aa).

An N-terminal signal peptide occupies residues 1-23; that stretch reads MAMAKALLFAILGCLCLCSAVLA. 3 disulfide bridges follow: Cys144/Cys187, Cys178/Cys220, and Cys276/Cys328. The active site involves Cys147. Residues His282 and Asn303 contribute to the active site.

The protein belongs to the peptidase C1 family.

The protein localises to the vacuole. In terms of biological role, cysteine protease that may have a developmental senescence specific cell death function during apoptosis, heavy metal detoxification, and hypersensitive response. This Oryza sativa subsp. indica (Rice) protein is Senescence-specific cysteine protease SAG39.